The chain runs to 308 residues: Aspartate carbamoyltransferase catalytic subunit (308 aa).

The carbamoyl phosphate site is built by R55 and T56. K83 provides a ligand contact to L-aspartate. R105, H133, and Q136 together coordinate carbamoyl phosphate. The L-aspartate site is built by R166 and R220. The carbamoyl phosphate site is built by G261 and P262.

This sequence belongs to the aspartate/ornithine carbamoyltransferase superfamily. ATCase family. Heterododecamer (2C3:3R2) of six catalytic PyrB chains organized as two trimers (C3), and six regulatory PyrI chains organized as three dimers (R2).

It catalyses the reaction carbamoyl phosphate + L-aspartate = N-carbamoyl-L-aspartate + phosphate + H(+). Its pathway is pyrimidine metabolism; UMP biosynthesis via de novo pathway; (S)-dihydroorotate from bicarbonate: step 2/3. Functionally, catalyzes the condensation of carbamoyl phosphate and aspartate to form carbamoyl aspartate and inorganic phosphate, the committed step in the de novo pyrimidine nucleotide biosynthesis pathway. This Chlorobaculum parvum (strain DSM 263 / NCIMB 8327) (Chlorobium vibrioforme subsp. thiosulfatophilum) protein is Aspartate carbamoyltransferase catalytic subunit.